The primary structure comprises 196 residues: Small ribosomal subunit protein uS4c (196 aa).

Positions 16–36 are disordered; sequence GALPGLTRKTPKSGSNLKKKF. Residues 89 to 169 form the S4 RNA-binding domain; sequence MRLDNILFRL…LPKHLTIDTL (81 aa).

Belongs to the universal ribosomal protein uS4 family. Part of the 30S ribosomal subunit. Contacts protein S5. The interaction surface between S4 and S5 is involved in control of translational fidelity.

The protein resides in the plastid. It localises to the chloroplast. Its function is as follows. One of the primary rRNA binding proteins, it binds directly to 16S rRNA where it nucleates assembly of the body of the 30S subunit. With S5 and S12 plays an important role in translational accuracy. This chain is Small ribosomal subunit protein uS4c (rps4), found in Brachypodium pinnatum (Tor grass).